The primary structure comprises 956 residues: Valine--tRNA ligase (956 aa).

Residues 43-53 (PNITGNLHIGH) carry the 'HIGH' region motif. Residues 556–560 (KMSKS) carry the 'KMSKS' region motif. Lys559 is an ATP binding site. A coiled-coil region spans residues 889-920 (PKEKELKNLNKEISKIQLAINKLQQRLSNEEF).

It belongs to the class-I aminoacyl-tRNA synthetase family. ValS type 1 subfamily. Monomer.

It is found in the cytoplasm. The enzyme catalyses tRNA(Val) + L-valine + ATP = L-valyl-tRNA(Val) + AMP + diphosphate. Functionally, catalyzes the attachment of valine to tRNA(Val). As ValRS can inadvertently accommodate and process structurally similar amino acids such as threonine, to avoid such errors, it has a 'posttransfer' editing activity that hydrolyzes mischarged Thr-tRNA(Val) in a tRNA-dependent manner. The protein is Valine--tRNA ligase of Buchnera aphidicola subsp. Baizongia pistaciae (strain Bp).